A 150-amino-acid chain; its full sequence is Troponin C, isoform 1 (150 aa).

Met-1 is modified (N-acetylmethionine). 4 consecutive EF-hand domains span residues 7–42 (DQVQ…MGVK), 43–78 (ISDR…FLSE), 83–118 (ALKK…LDNK), and 119–150 (LTED…MMNG). The Ca(2+) site is built by Asp-56, Asp-58, Ser-60, Glu-62, and Glu-67. Ca(2+) contacts are provided by Asp-132, Asp-134, Ser-136, Thr-138, and Glu-143.

The protein belongs to the troponin C family.

Its function is as follows. Troponin is the central regulatory protein of striated muscle contraction. Tn consists of three components: Tn-I which is the inhibitor of actomyosin ATPase, Tn-T which contains the binding site for tropomyosin and Tn-C. The binding of calcium to Tn-C abolishes the inhibitory action of Tn on actin filaments. This chain is Troponin C, isoform 1, found in Homarus americanus (American lobster).